Reading from the N-terminus, the 525-residue chain is Probable protein kinase UbiB (525 aa).

Positions 118–500 (EFERVPVASA…QRRTNRLLQA (383 aa)) constitute a Protein kinase domain. Residues 124–132 (VASASIAQV) and K150 contribute to the ATP site. D285 serves as the catalytic Proton acceptor. The helical transmembrane segment at 501 to 521 (LLVFGLAVGAGAVIARVLIVL) threads the bilayer.

Belongs to the ABC1 family. UbiB subfamily.

It localises to the cell inner membrane. It participates in cofactor biosynthesis; ubiquinone biosynthesis [regulation]. Functionally, is probably a protein kinase regulator of UbiI activity which is involved in aerobic coenzyme Q (ubiquinone) biosynthesis. The polypeptide is Probable protein kinase UbiB (Burkholderia mallei (strain SAVP1)).